We begin with the raw amino-acid sequence, 270 residues long: ATP synthase subunit a (270 aa).

A run of 5 helical transmembrane segments spans residues 37-57 (NVHIDSLFFSVLTGLIFLGVF), 98-118 (IAPLALTIFCWVFLMNLMDLV), 143-163 (DVNITMAMALGVFALMIYYSI), 208-228 (LFGNMFAGEVVFILCAAMLPW), and 239-259 (AIFHILVILIQSFVFMMLTIV).

The protein belongs to the ATPase A chain family. F-type ATPases have 2 components, CF(1) - the catalytic core - and CF(0) - the membrane proton channel. CF(1) has five subunits: alpha(3), beta(3), gamma(1), delta(1), epsilon(1). CF(0) has three main subunits: a(1), b(2) and c(9-12). The alpha and beta chains form an alternating ring which encloses part of the gamma chain. CF(1) is attached to CF(0) by a central stalk formed by the gamma and epsilon chains, while a peripheral stalk is formed by the delta and b chains.

Its subcellular location is the cell inner membrane. In terms of biological role, key component of the proton channel; it plays a direct role in the translocation of protons across the membrane. This Vibrio cholerae serotype O1 (strain ATCC 39315 / El Tor Inaba N16961) protein is ATP synthase subunit a.